The following is a 146-amino-acid chain: SMR1 protein (146 aa).

Positions 1–22 are cleaved as a signal peptide; the sequence is MKSLYLIFGLWILLACFQSGEG. 2 disordered regions span residues 23-43 and 99-146; these read VRGP…TLPH and TAPD…GGGK. A compositionally biased stretch (polar residues) spans 109-139; that stretch reads PPTQLHSTEQANTKTDAKISNTTATTQNSTD. 2 N-linked (GlcNAc...) asparagine glycosylation sites follow: asparagine 129 and asparagine 136.

In terms of processing, several O-linked glycosylation sites might be present in the C-terminal part. As to expression, expressed predominantly in the acinar cells of the submandibular gland and to lesser extent in the prostate.

It is found in the secreted. In terms of biological role, sialorphin may be involved in the modulation of mineral balance between at least four systems: kidney, bone, tooth and circulation. Submandibular gland peptide T is able to directly or indirectly down-regulate cardiovascular depression induced by septic shock (endotoxin stimuli), or anaphylactic challenge (nematode antigen sensitization). Functionally, sialorphin is an endogenous inhibitor of neprilysin. Inhibits the breakdown of Met-enkephalin and substance P in isolated tissue from the dorsal zone of the rat spinal cord. Has an analgesic effect when administered to rats by intravenous injection. The chain is SMR1 protein (Vcsa1) from Rattus norvegicus (Rat).